The primary structure comprises 253 residues: Electron transfer flavoprotein subunit beta, mitochondrial (253 aa).

This sequence belongs to the ETF beta-subunit/FixA family. Heterodimer of an alpha and a beta subunit. The cofactor is FAD. AMP serves as cofactor.

Its subcellular location is the mitochondrion matrix. In terms of biological role, the electron transfer flavoprotein serves as a specific electron acceptor for several dehydrogenases, including five acyl-CoA dehydrogenases, glutaryl-CoA and sarcosine dehydrogenase. It transfers the electrons to the main mitochondrial respiratory chain via ETF-ubiquinone oxidoreductase (ETF dehydrogenase). The protein is Electron transfer flavoprotein subunit beta, mitochondrial (ETFB) of Oryza sativa subsp. indica (Rice).